Reading from the N-terminus, the 3014-residue chain is Cadherin EGF LAG seven-pass G-type receptor 1 (3014 aa).

An N-terminal signal peptide occupies residues 1–20; the sequence is MAPPPPPVLPVLLLLAAAAA. At 22–2469 the chain is on the extracellular side; it reads PAMGLRAAAW…RENGEVLPLK (2448 aa). Residues 205 to 242 are disordered; the sequence is AGTPSASPSPSPPLPPNLPEARAGPARRARRGTSGRGS. Residues 211-222 show a composition bias toward pro residues; the sequence is SPSPSPPLPPNL. 9 consecutive Cadherin domains span residues 246 to 353, 354 to 459, 460 to 565, 566 to 687, 688 to 789, 790 to 892, 893 to 999, 1000 to 1101, and 1106 to 1224; these read PMPN…SPVF, EQSE…YPQF, SEQN…EPIF, VSSP…DPVF, TQPT…RPVF, QSSH…APQF, LWDF…APMF, EKDE…PPVL, and ILFN…SPLL. N403, N546, N634, and N778 each carry an N-linked (GlcNAc...) asparagine glycan. N-linked (GlcNAc...) asparagine glycans are attached at residues N1114, N1139, N1213, N1249, N1259, and N1287. Residues 1303–1361 enclose the EGF-like 1; calcium-binding domain; sequence DDNICLREPCENYMKCVSVLRFDSSAPFLSSTTVLFRPIHPINGLRCRCPPGFTGDYCE. Disulfide bonds link C1307-C1318, C1312-C1349, C1351-C1360, C1367-C1378, C1372-C1387, C1389-C1398, C1407-C1418, C1412-C1428, and C1430-C1440. The EGF-like 2; calcium-binding domain occupies 1363-1399; sequence EIDLCYSDPCGANGRCRSREGGYTCECFEDFTGEHCE. The region spanning 1403-1441 is the EGF-like 3; calcium-binding domain; that stretch reads RSGRCANGVCKNGGTCVNLLIGGFHCVCPPGEYERPYCE. The Laminin G-like 1 domain maps to 1442–1646; that stretch reads VTTRSFPPQS…IANNGTREGC (205 aa). N-linked (GlcNAc...) asparagine glycans are attached at residues N1576, N1623, and N1640. Intrachain disulfides connect C1620-C1646, C1653-C1664, C1658-C1673, C1675-C1684, C1840-C1870, C1876-C1887, C1881-C1896, C1898-C1907, C1911-C1922, C1916-C1934, C1936-C1945, C1953-C1966, and C1968-C1978. One can recognise an EGF-like 4; calcium-binding domain in the interval 1649–1685; the sequence is RRNFCDGRRCQNGGTCVNRWNMYLCECPLRFGGKNCE. N1666 carries the post-translational modification (3R)-3-hydroxyasparagine. A Laminin G-like 2 domain is found at 1689-1870; that stretch reads PHPQLFSGES…ALKVRVKDGC (182 aa). In terms of domain architecture, EGF-like 5; calcium-binding spans 1872–1907; that stretch reads VDDPCTSSPCPPNSRCHDAWEDYSCVCDKGYLGINC. D1889 is modified ((3R)-3-hydroxyaspartate). An EGF-like 6; calcium-binding domain is found at 1908–1946; it reads VDACHLNPCENMGACVRSPGSPQGYVCECGPSHYGPYCE. Positions 1947–1979 constitute an EGF-like 7; calcium-binding domain; sequence NKLDLPCPRGWWGNPVCGPCHCAVSKGFDPDCN. An N-linked (GlcNAc...) asparagine glycan is attached at N1979. In terms of domain architecture, EGF-like 8; calcium-binding spans 1981–2016; it reads TNGQCQCKENYYKLLAQDTCLPCDCFPHGSHSRTCD. 5 disulfide bridges follow: C1985–C2000, C1987–C2003, C2005–C2015, C2024–C2033, and C2036–C2048. The Laminin EGF-like domain occupies 2003–2050; it reads CDCFPHGSHSRTCDMATGQCACKPGVIGRQCNRCDNPFAEVTTLGCEV. 3 N-linked (GlcNAc...) asparagine glycosylation sites follow: N2103, N2122, and N2257. A disordered region spans residues 2291 to 2328; it reads PEEKEGPLLRPAGRRTTPQTTRPGPGTEREAPISRRRR. A GAIN-B domain is found at 2297-2461; it reads PLLRPAGRRT…AVLMDISRRE (165 aa). A compositionally biased stretch (low complexity) spans 2300-2316; the sequence is RPAGRRTTPQTTRPGPG. 2 disulfides stabilise this stretch: C2411–C2443 and C2431–C2445. The segment at 2411–2461 is GPS; sequence CVFWNHSLAVGGTGGWSARGCELLSRNRTHVACQCSHTASFAVLMDISRRE. N-linked (GlcNAc...) asparagine glycosylation is found at N2415 and N2437. A helical membrane pass occupies residues 2470-2490; the sequence is IVTYAAVSLSLAALLVAFVLL. The Cytoplasmic segment spans residues 2491-2501; the sequence is SLVRMLRSNLH. The helical transmembrane segment at 2502-2522 threads the bilayer; the sequence is SIHKHLAVALFLSQLVFVIGI. N2523 is a glycosylation site (N-linked (GlcNAc...) asparagine). Topologically, residues 2523 to 2527 are extracellular; it reads NQTEN. Residues 2528–2548 traverse the membrane as a helical segment; the sequence is PFLCTVVAILLHYIYMSTFAW. Topologically, residues 2549-2572 are cytoplasmic; that stretch reads TLVESLHVYRMLTEVRNIDTGPMR. A helical transmembrane segment spans residues 2573–2593; that stretch reads FYYVVGWGIPAIVTGLAVGLD. The Extracellular segment spans residues 2594 to 2611; sequence PQGYGNPDFCWLSLQDTL. The chain crosses the membrane as a helical span at residues 2612–2632; it reads IWSFAGPIGAVIIINTVTSVL. Topologically, residues 2633–2655 are cytoplasmic; that stretch reads SAKVSCQRKHHYYGKKGIVSLLR. Residues 2656 to 2676 form a helical membrane-spanning segment; that stretch reads TAFLLLLLISATWLLGLLAVN. At 2677–2683 the chain is on the extracellular side; that stretch reads RDALSFH. The helical transmembrane segment at 2684–2704 threads the bilayer; it reads YLFAIFSGLQGPFVLLFHCVL. Over 2705–3014 the chain is Cytoplasmic; it reads NQEVRKHLKG…QADGSDSEKP (310 aa). Phosphoserine is present on residues S2761 and S2764. 2 disordered regions span residues 2777 to 2939 and 2954 to 3014; these read SSGL…PPPL and LADC…SEKP. A compositionally biased stretch (basic and acidic residues) spans 2796–2806; it reads SCKDPPGHDSD. Over residues 2814–2825 the composition is skewed to low complexity; it reads DEQSSSYASSHS. Residues S2871 and S2873 each carry the phosphoserine modification. Basic and acidic residues predominate over residues 2876–2904; that stretch reads PSGKPRLKVETKVSVELHREEQGSHRGEY. Residues 2960 to 2969 show a composition bias toward low complexity; the sequence is SPTSSRTSSL. The span at 2983-2992 shows a compositional bias: basic and acidic residues; it reads PGREPGRDHL.

It belongs to the G-protein coupled receptor 2 family. LN-TM7 subfamily. Post-translationally, the iron and 2-oxoglutarate dependent 3-hydroxylation of aspartate and asparagine is (R) stereospecific within EGF domains.

It is found in the cell membrane. Its function is as follows. Receptor that may have an important role in cell/cell signaling during nervous system formation. The sequence is that of Cadherin EGF LAG seven-pass G-type receptor 1 (CELSR1) from Homo sapiens (Human).